The chain runs to 355 residues: MKFLDEAKVYIKSGDGGAGAVSFRREKFIEFGGPDGGDGGRGGDVWVEVVNGLNTLIDFRFQQHFKASIGQHGMGKTRTGAKGSDVVLKVPVGTQIFEEDNETLIMDLTKEGQRFRLAAGGNGGFGNAYFKSSTNQAPTHANPGLAGEEKTIWLRLKLIADAGLVGLPNAGKSTFLATVTRARPKIANYPFTTLHPNLGVATIDGREFVLADIPGLIEGAHEGVGIGDRFLGHVERTRVLLHLVSAQEEKVGKAYKTVKAELDAYGGGLTDKPEIVALSQIDVLDEKELKKKAKELEKACGRPPLLLSAAAHIGMTEALRALRDIIVSASNGGDTALPDRSMPHESEVEEEDDRL.

The Obg domain occupies methionine 1–isoleucine 159. The OBG-type G domain occupies alanine 160–valine 327. Residues glycine 166 to serine 173, phenylalanine 191 to histidine 195, aspartate 212 to glycine 215, serine 279 to aspartate 282, and serine 308 to alanine 310 contribute to the GTP site. Positions 173 and 193 each coordinate Mg(2+). A disordered region spans residues glycine 333–leucine 355.

Belongs to the TRAFAC class OBG-HflX-like GTPase superfamily. OBG GTPase family. As to quaternary structure, monomer. Mg(2+) serves as cofactor.

The protein localises to the cytoplasm. In terms of biological role, an essential GTPase which binds GTP, GDP and possibly (p)ppGpp with moderate affinity, with high nucleotide exchange rates and a fairly low GTP hydrolysis rate. Plays a role in control of the cell cycle, stress response, ribosome biogenesis and in those bacteria that undergo differentiation, in morphogenesis control. The protein is GTPase Obg of Agrobacterium fabrum (strain C58 / ATCC 33970) (Agrobacterium tumefaciens (strain C58)).